The primary structure comprises 265 residues: Polyphosphate glucokinase (265 aa).

The segment covering 1–18 (MTSTGPETSETPGATTQR) has biased composition (polar residues). Residues 1–22 (MTSTGPETSETPGATTQRHGFG) form a disordered region. 24–29 (DVGGSG) is a binding site for ATP.

This sequence belongs to the ROK (NagC/XylR) family. As to quaternary structure, homodimer.

The catalysed reaction is [phosphate](n) + D-glucose = [phosphate](n-1) + D-glucose 6-phosphate + H(+). It carries out the reaction D-glucose + ATP = D-glucose 6-phosphate + ADP + H(+). In terms of biological role, catalyzes the phosphorylation of glucose using polyphosphate or ATP as the phosphoryl donor. Polyphosphate, rather than ATP, seems to be the major phosphate donor for the enzyme in M.tuberculosis. GTP, UTP and CTP can replace ATP as phosphoryl donor. The protein is Polyphosphate glucokinase (ppgK) of Mycobacterium tuberculosis (strain ATCC 25177 / H37Ra).